We begin with the raw amino-acid sequence, 217 residues long: Large ribosomal subunit protein uL1 (217 aa).

Belongs to the universal ribosomal protein uL1 family. In terms of assembly, part of the 50S ribosomal subunit.

In terms of biological role, binds directly to 23S rRNA. Probably involved in E site tRNA release. Its function is as follows. Protein L1 is also a translational repressor protein, it controls the translation of its operon by binding to its mRNA. The protein is Large ribosomal subunit protein uL1 of Hyperthermus butylicus (strain DSM 5456 / JCM 9403 / PLM1-5).